The primary structure comprises 182 residues: Ribosome maturation factor RimM (182 aa).

Residues 103–182 (GDDYYWKDLM…VIEADWDPGF (80 aa)) enclose the PRC barrel domain.

It belongs to the RimM family. Binds ribosomal protein uS19.

Its subcellular location is the cytoplasm. In terms of biological role, an accessory protein needed during the final step in the assembly of 30S ribosomal subunit, possibly for assembly of the head region. Essential for efficient processing of 16S rRNA. May be needed both before and after RbfA during the maturation of 16S rRNA. It has affinity for free ribosomal 30S subunits but not for 70S ribosomes. In Serratia proteamaculans (strain 568), this protein is Ribosome maturation factor RimM.